A 132-amino-acid chain; its full sequence is NADPH-dependent 7-cyano-7-deazaguanine reductase (132 aa).

C48 acts as the Thioimide intermediate in catalysis. The active-site Proton donor is the D55. Substrate contacts are provided by residues 70 to 72 (LEL) and 89 to 90 (ME).

The protein belongs to the GTP cyclohydrolase I family. QueF type 1 subfamily.

It is found in the cytoplasm. It carries out the reaction 7-aminomethyl-7-carbaguanine + 2 NADP(+) = 7-cyano-7-deazaguanine + 2 NADPH + 3 H(+). The protein operates within tRNA modification; tRNA-queuosine biosynthesis. In terms of biological role, catalyzes the NADPH-dependent reduction of 7-cyano-7-deazaguanine (preQ0) to 7-aminomethyl-7-deazaguanine (preQ1). The polypeptide is NADPH-dependent 7-cyano-7-deazaguanine reductase (Elusimicrobium minutum (strain Pei191)).